The chain runs to 333 residues: Antimicrobial peptides (333 aa).

The first 23 residues, 1–23, serve as a signal peptide directing secretion; that stretch reads MVQKGVVFGVLLILFICSTLTSA. The segment at 23–52 is disordered; it reads ADSKPNPTKEEEPAKKPDEVSVKSGGPEVS. A propeptide spans 24-54 (acidic peptide 1); that stretch reads DSKPNPTKEEEPAKKPDEVSVKSGGPEVSED. The segment covering 29-43 has biased composition (basic and acidic residues); the sequence is PTKEEEPAKKPDEVS. The residue at position 55 (Q55) is a Pyrrolidone carboxylic acid. 2 disulfides stabilise this stretch: C60–C70 and C61–C74. Residues 75-102 constitute a propeptide, acidic peptide 2; the sequence is ANAEEAAAAIPEASEELAQEEAPVYSED. Residue Q103 is modified to Pyrrolidone carboxylic acid. Cystine bridges form between C108–C118 and C109–C122. Residues 123–148 constitute a propeptide, acidic peptide 3; that stretch reads QNAEEAAAAIPEATEKAQEAPVYSED. Q149 is subject to Pyrrolidone carboxylic acid. Intrachain disulfides connect C154–C164 and C155–C168. The propeptide at 169 to 196 is acidic peptide 4; that stretch reads QNAEEAAAAVAIPEASEKAQEGPVYSED. Q197 carries the pyrrolidone carboxylic acid modification. 2 disulfides stabilise this stretch: C202–C212 and C203–C216. Residues 217–232 constitute a propeptide, acidic peptide 5; it reads SNAADEVATPEDVEPG. Q233 is subject to Pyrrolidone carboxylic acid. Intrachain disulfides connect C238–C248 and C239–C252. The propeptide at 253-278 is acidic peptide 6; sequence HNAAEEATLKAFEEEAAREQPVYSED. Q279 is modified (pyrrolidone carboxylic acid). 2 disulfides stabilise this stretch: C284–C294 and C285–C298. The propeptide at 299–333 is acidic peptide 7; it reads QSAEEAAAFQAGEVTASLMLIMFKACPCMGPVPSV.

Post-translationally, the N-terminal of all peptides are blocked. In terms of processing, the 4 cysteine residues of all peptides are involved in intrachain disulfide bonds.

Its subcellular location is the secreted. Plays a role in the defense of the germinating seed against microorganisms, by inhibiting the growth of a range of filamentous fungi and bacteria, especially Gram-positive bacteria. Not cytotoxic for cultured human cells and are the smallest known plant-derived antimicrobial peptides. Peptide IB-AMP4 has a higher antifungal activity than IB-AMP1. The chain is Antimicrobial peptides (AMP) from Impatiens balsamina (Balsam).